We begin with the raw amino-acid sequence, 1240 residues long: Serine/threonine-protein kinase TAO2 (1240 aa).

S9 is subject to Phosphoserine. The 254-residue stretch at 28–281 (FSDLREIGHG…SEVLLKHRFV (254 aa)) folds into the Protein kinase domain. Residues 34–42 (IGHGSFGAV) and K57 contribute to the ATP site. The active-site Proton acceptor is D151. At S181 the chain carries Phosphoserine. A disordered region spans residues 320–463 (APNGPGAEAP…PTSTSSSARR (144 aa)). The span at 356–380 (SSHSVPSMSISASSQSSSVNSLADA) shows a compositional bias: low complexity. A compositionally biased stretch (acidic residues) spans 381 to 401 (SDNEEEEEEEEEEEEEEEEEG). The span at 402–417 (PESREMAMMQEGEHTV) shows a compositional bias: basic and acidic residues. S422 carries the phosphoserine modification. 2 coiled-coil regions span residues 493–528 (SALR…EEHS) and 581–608 (KELA…LQEN). S663 bears the Phosphoserine mark. A coiled-coil region spans residues 688–720 (LRQHEATRELELRQLQAVQRTRAELTRLQHQTE). 3 positions are modified to phosphoserine: S782, S830, and S832. A coiled-coil region spans residues 805 to 934 (RILGKEGTTL…GDGCPSPDIP (130 aa)). The segment at 899–946 (VLTPVPEEEEEEEEEGGAPIGTHRDPGDGCPSPDIPPEPPPSHLRQYP) is disordered. Over residues 904-914 (PEEEEEEEEEG) the composition is skewed to acidic residues. Residues 931 to 940 (PDIPPEPPPS) are compositionally biased toward pro residues. The next 5 helical transmembrane spans lie at 972–992 (LLPL…GGGL), 994–1014 (AALL…LFLC), 1019–1039 (LPPG…VLSL), 1045–1065 (LMGV…SLAL), and 1175–1195 (LASC…LLKG). The residue at position 999 (L999) is an Omega-N-methylarginine. L1037 carries the post-translational modification Phosphoserine. The tract at residues 1212–1240 (LGLSASRQLPPGTVAGRRSQTRRTLPPWR) is disordered.

Belongs to the protein kinase superfamily. STE Ser/Thr protein kinase family. STE20 subfamily. In terms of assembly, interacts with MAP2K3 and MAP2K6. Self-associates. Interacts with tubulins. Interacts with MAP3K7 and interferes with MAP3K7-binding to CHUK and thus prevents NF-kappa-B activation. Isoform 2 interacts with PCDH8; this complex may also include CDH2. The cofactor is Mg(2+). In terms of processing, autophosphorylated. Phosphorylated by ATM. Post-translationally, phosphorylated on Ser-1037 by MAPK14. This phosphorylation is required PCDH8 for endocytosis.

The protein resides in the cytoplasmic vesicle membrane. It localises to the cytoplasm. Its subcellular location is the cytoskeleton. It is found in the cell projection. The protein localises to the dendrite. The enzyme catalyses L-seryl-[protein] + ATP = O-phospho-L-seryl-[protein] + ADP + H(+). The catalysed reaction is L-threonyl-[protein] + ATP = O-phospho-L-threonyl-[protein] + ADP + H(+). Its function is as follows. Serine/threonine-protein kinase involved in different processes such as membrane blebbing and apoptotic bodies formation DNA damage response and MAPK14/p38 MAPK stress-activated MAPK cascade. Phosphorylates itself, MBP, activated MAPK8, MAP2K3, MAP2K6 and tubulins. Activates the MAPK14/p38 MAPK signaling pathway through the specific activation and phosphorylation of the upstream MAP2K3 and MAP2K6 kinases. In response to DNA damage, involved in the G2/M transition DNA damage checkpoint by activating the p38/MAPK14 stress-activated MAPK cascade, probably by mediating phosphorylation of upstream MAP2K3 and MAP2K6 kinases. May affect microtubule organization and stability. May play a role in the osmotic stress-MAPK8 pathway. Prevents MAP3K7-mediated activation of CHUK, and thus NF-kappa-B activation. Isoform 2, but not isoform 1, is required for PCDH8 endocytosis. Following homophilic interactions between PCDH8 extracellular domains, isoform 2 phosphorylates and activates MAPK14/p38 MAPK which in turn phosphorylates isoform 2. This process leads to PCDH8 endocytosis and CDH2 cointernalization. Both isoforms are involved in MAPK14/p38 MAPK activation. The sequence is that of Serine/threonine-protein kinase TAO2 (Taok2) from Mus musculus (Mouse).